The chain runs to 214 residues: Ribonuclease S-2 (214 aa).

Residues methionine 1–glycine 22 form the signal peptide. A disulfide bridge links cysteine 38 with cysteine 43. Asparagine 49 is a glycosylation site (N-linked (GlcNAc...) asparagine). Residue histidine 53 is the Proton donor of the active site. Histidine 53 contributes to the RNA binding site. Asparagine 59 carries N-linked (GlcNAc...) asparagine glycosylation. Cysteines 67 and 116 form a disulfide. Residues aspartate 91 to leucine 92, lysine 94, and phenylalanine 105 each bind RNA. Residue glutamate 109 is part of the active site. Lysine 112–histidine 113 is an RNA binding site. Residue histidine 113 is the Proton acceptor of the active site. N-linked (GlcNAc...) asparagine glycosylation occurs at asparagine 160. 2 disulfide bridges follow: cysteine 175/cysteine 204 and cysteine 187/cysteine 198.

The protein belongs to the RNase T2 family.

It localises to the secreted. The protein resides in the extracellular space. It catalyses the reaction a ribonucleotidyl-ribonucleotide-RNA + H2O = a 3'-end 3'-phospho-ribonucleotide-RNA + a 5'-end dephospho-ribonucleoside-RNA + H(+). Functionally, self-incompatibility (SI) is the inherited ability of a flowering plant to prevent self-fertilization by discriminating between self and non-self pollen during pollination. In many species of the Solanaceae, self-incompatibility is controlled by the single, multiallelic locus S. This stylar glycoprotein is associated with expression of self-incompatibility in potato. This chain is Ribonuclease S-2 (S-2), found in Nicotiana alata (Winged tobacco).